The sequence spans 693 residues: Cleavage and polyadenylation specificity factor subunit 3-I (693 aa).

Residues 81-86 (HFHIDH) carry the HXHXDH motif motif.

The protein belongs to the metallo-beta-lactamase superfamily. RNA-metabolizing metallo-beta-lactamase-like family. INTS11 subfamily. As to quaternary structure, component of the CPSF complex, at least composed of CPSF160, CPSF100, CPSF73-I, CPSF73-II, CPSF30, FY and FIPS5. Interacts with CLPS3, CPSF100, CPSF160 and FY. In terms of tissue distribution, highly expressed in carpels. Also detected in seedlings, roots, stems, leaves, flowers and siliques.

Its subcellular location is the nucleus. Functionally, component of the cleavage and polyadenylation specificity factor (CPSF) complex that play a key role in pre-mRNA 3'-end formation, recognizing the AAUAAA signal sequence and interacting with poly(A) polymerase and other factors to bring about cleavage and poly(A) addition. May function as mRNA 3'-end-processing endonuclease and also be involved in the histone 3'-end pre-mRNA processing. The sequence is that of Cleavage and polyadenylation specificity factor subunit 3-I (CPSF73-I) from Arabidopsis thaliana (Mouse-ear cress).